Consider the following 216-residue polypeptide: MTAPNPDPRRLWDISPPLSPATPVWPGDTPFQQQPAWQIDAQCPVNVGRITLSPHTGAHADAPLHYAADGAPIGAVPLAPYLGRCRVIHCIGAAPLVQPHHVEHALDALPPRVLLRTYRQAPLAQWDPDFCAVSPDTIALLAAHGVQLVGIDTPSLDPQDSKTMDAHNAVRRHGLAILEGIVLDQVDAGDYELIALPLRFAALDASPVRAVLRSLD.

Substrate is bound at residue tryptophan 25. Histidine 55, histidine 59, and aspartate 61 together coordinate Zn(2+). The Proton donor/acceptor role is filled by histidine 65. Residues histidine 167 and glutamate 179 each coordinate Zn(2+).

The protein belongs to the Cyclase 1 superfamily. KynB family. In terms of assembly, homodimer. Zn(2+) is required as a cofactor.

It catalyses the reaction N-formyl-L-kynurenine + H2O = L-kynurenine + formate + H(+). It functions in the pathway amino-acid degradation; L-tryptophan degradation via kynurenine pathway; L-kynurenine from L-tryptophan: step 2/2. Catalyzes the hydrolysis of N-formyl-L-kynurenine to L-kynurenine, the second step in the kynurenine pathway of tryptophan degradation. This chain is Kynurenine formamidase, found in Cupriavidus taiwanensis (strain DSM 17343 / BCRC 17206 / CCUG 44338 / CIP 107171 / LMG 19424 / R1) (Ralstonia taiwanensis (strain LMG 19424)).